The sequence spans 287 residues: ATP synthase gamma chain (287 aa).

The protein belongs to the ATPase gamma chain family. F-type ATPases have 2 components, CF(1) - the catalytic core - and CF(0) - the membrane proton channel. CF(1) has five subunits: alpha(3), beta(3), gamma(1), delta(1), epsilon(1). CF(0) has three main subunits: a, b and c.

It is found in the cell inner membrane. Functionally, produces ATP from ADP in the presence of a proton gradient across the membrane. The gamma chain is believed to be important in regulating ATPase activity and the flow of protons through the CF(0) complex. The sequence is that of ATP synthase gamma chain from Sodalis glossinidius (strain morsitans).